The primary structure comprises 463 residues: NADH dehydrogenase [ubiquinone] iron-sulfur protein 2, mitochondrial (463 aa).

A mitochondrion-targeting transit peptide spans 1-33; it reads MAALRALGGLRGVAAQVLRPGAGVRLPIQPSRG. Lys-62 is subject to N6-acetyllysine. Arg-118 carries the post-translational modification Symmetric dimethylarginine. [4Fe-4S] cluster contacts are provided by Cys-326, Cys-332, and Cys-347.

The protein belongs to the complex I 49 kDa subunit family. Core subunit of respiratory chain NADH dehydrogenase (Complex I) which is composed of 45 different subunits. Component of the iron-sulfur (IP) fragment of the enzyme. Interacts with NDUFAF3. Interacts with NDUFAF7. Interacts with CERS2. [4Fe-4S] cluster serves as cofactor. In terms of processing, dimethylation at Arg-118 by NDUFAF7 takes place after NDUFS2 assembles into the complex I, leading to stabilize the early intermediate complex.

It localises to the mitochondrion inner membrane. The enzyme catalyses a ubiquinone + NADH + 5 H(+)(in) = a ubiquinol + NAD(+) + 4 H(+)(out). In terms of biological role, core subunit of the mitochondrial membrane respiratory chain NADH dehydrogenase (Complex I) which catalyzes electron transfer from NADH through the respiratory chain, using ubiquinone as an electron acceptor. Essential for the catalytic activity and assembly of complex I. Redox-sensitive, critical component of the oxygen-sensing pathway in the pulmonary vasculature which plays a key role in acute pulmonary oxygen-sensing and hypoxic pulmonary vasoconstriction. Plays an important role in carotid body sensing of hypoxia. Essential for glia-like neural stem and progenitor cell proliferation, differentiation and subsequent oligodendrocyte or neuronal maturation. The protein is NADH dehydrogenase [ubiquinone] iron-sulfur protein 2, mitochondrial (NDUFS2) of Pongo pygmaeus (Bornean orangutan).